The primary structure comprises 260 residues: uncharacterized protein (260 aa).

The ABC transporter domain occupies 4-231 (LHVDHVTHTY…PKELAAMLPF (228 aa)). Residue 40–47 (GPSGCGKT) participates in ATP binding.

Belongs to the ABC transporter superfamily.

This is an uncharacterized protein from Bacillus subtilis (strain 168).